The primary structure comprises 204 residues: Photosynthetic NDH subunit of subcomplex B 3, chloroplastic (204 aa).

2 disordered regions span residues methionine 1–lysine 24 and lysine 45–proline 68. A chloroplast-targeting transit peptide spans methionine 1–arginine 48. The 2Fe-2S ferredoxin-type domain occupies histidine 76 to leucine 180. Residues cysteine 120, cysteine 126, cysteine 129, and cysteine 162 each contribute to the [2Fe-2S] cluster site.

Part of the chloroplast NDH complex, composed of a mixture of chloroplast and nucleus encoded subunits. Component of the NDH subcomplex B, at least composed of PnsB1, PnsB2, PnsB3, PnsB4 and PnsB5.

It localises to the plastid. The protein resides in the chloroplast thylakoid membrane. Functionally, NDH shuttles electrons from NAD(P)H:plastoquinone, via FMN and iron-sulfur (Fe-S) centers, to quinones in the photosynthetic chain and possibly in a chloroplast respiratory chain. The immediate electron acceptor for the enzyme in this species is believed to be plastoquinone. Couples the redox reaction to proton translocation, and thus conserves the redox energy in a proton gradient. In Arabidopsis thaliana (Mouse-ear cress), this protein is Photosynthetic NDH subunit of subcomplex B 3, chloroplastic.